Consider the following 197-residue polypeptide: MSNVRVSNGSPSLERMDARQAEHPKPSACRNLFGPVNHEELTRDLEKHCRDMEEASQRKWNFDFQNHKPLEGRYEWQEVERGSLPEFYYRPPRPPKSACKVLAQESQDVSGSRQAVPLIGSQANSEDRHLVDQMPDSSDNPAGLAEQCPGMRKRPAAEDSSSQNKRANRTEENVSDGSPNAGTVEQTPKKPGLRRQT.

The segment covering 1 to 11 has biased composition (polar residues); that stretch reads MSNVRVSNGSP. Residues 1–34 form a disordered region; sequence MSNVRVSNGSPSLERMDARQAEHPKPSACRNLFG. S10 is modified (phosphoserine; by UHMK1). The segment covering 14-25 has biased composition (basic and acidic residues); the sequence is ERMDARQAEHPK. The tract at residues 51–91 is interaction with CDK2; it reads DMEEASQRKWNFDFQNHKPLEGRYEWQEVERGSLPEFYYRP. Position 74 is a phosphotyrosine; by SRC (Y74). Residues 86–197 are disordered; the sequence is EFYYRPPRPP…PKKPGLRRQT (112 aa). The residue at position 88 (Y88) is a Phosphotyrosine; by ABL, LYN, SRC and JAK2. Y89 is subject to Phosphotyrosine. Positions 104–113 are enriched in polar residues; it reads QESQDVSGSR. Residues 153–169 carry the Nuclear localization signal motif; it reads KRPAAEDSSSQNKRANR. The residue at position 170 (T170) is a Phosphothreonine; by CaMK1. The segment covering 175–186 has biased composition (polar residues); it reads SDGSPNAGTVEQ. A Phosphothreonine; by PKB/AKT1, CDK1 and CDK2 modification is found at T187. The residue at position 197 (T197) is a Phosphothreonine; by CaMK1, PKB/AKT1, RPS6KA1, RPS6KA3 and PIM1.

It belongs to the CDI family. In terms of assembly, forms a ternary complex composed of CCNE1, CDK2 and CDKN1B. Interacts directly with CCNE1; the interaction is inhibited by CDK2-dependent phosphorylation on Thr-187. Interacts with COPS5, subunit of the COP9 signalosome complex; the interaction leads to CDKN1B degradation. Interacts with NUP50; the interaction leads to nuclear import and degradation of phosphorylated CDKN1B. Interacts with CCND1 and SNX6. Interacts (Thr-197-phosphorylated form) with 14-3-3 proteins, binds strongly YWHAQ, weakly YWHAE and YWHAH, but not YWHAB nor YWHAZ; the interaction with YWHAQ results in translocation to the cytoplasm. Interacts with AKT1 and LYN; the interactions lead to cytoplasmic mislocation, phosphorylation of CDKN1B and inhibition of cell cycle arrest. Forms a ternary complex with CCNA2 and CDK2; CDKN1B inhibits the kinase activity of CDK2 through conformational rearrangements. Interacts (unphosphorylated form) with CDK2. Forms a complex with CDK2 and SPDYA, but does not directly interact with SPDYA. Forms a ternary complex composed of cyclin D, CDK4 and CDKN1B. Interacts (phosphorylated on Tyr-88 and Tyr-89) with CDK4; the interaction is required for cyclin D and CDK4 complex assembly, induces nuclear translocation and activates the CDK4 kinase activity. Interacts with GRB2. Interacts with PIM1. Identified in a complex with SKP1, SKP2 and CKS1B. Interacts with UHMK1; the interaction leads to cytoplasmic mislocation, phosphorylation of CDKN1B and inhibition of cell cycle arrest. Also interacts with CDK1. Dephosphorylated on Thr-187 by PPM1H, leading to CDKN1B stability. In terms of processing, phosphorylated; phosphorylation occurs on serine, threonine and tyrosine residues. Phosphorylation on Ser-10 is the major site of phosphorylation in resting cells, takes place at the G(0)-G(1) phase and leads to protein stability. Phosphorylation on other sites is greatly enhanced by mitogens, growth factors, MYC and in certain cancer cell lines. The phosphorylated form found in the cytoplasm is inactivate. Phosphorylation on Thr-197 is required for interaction with 14-3-3 proteins. Phosphorylation on Thr-187, by CDK1 and CDK2 leads to protein ubiquitination and proteasomal degradation. Tyrosine phosphorylation promotes this process. Phosphorylation by PKB/AKT1 can be suppressed by LY294002, an inhibitor of the catalytic subunit of PI3K. Phosphorylation on Tyr-88 and Tyr-89 has no effect on binding CDK2, but is required for binding CDK4. Dephosphorylated on tyrosine residues by G-CSF. Dephosphorylated on Thr-187 by PPM1H, leading to CDKN1B stability. Ubiquitinated; in the cytoplasm by the KPC complex (composed of RNF123/KPC1 and UBAC1/KPC2) and, in the nucleus, by SCF(SKP2). The latter requires prior phosphorylation on Thr-187. Ubiquitinated; by a TRIM21-containing SCF(SKP2)-like complex; leads to its degradation. Post-translationally, subject to degradation in the lysosome. Interaction with SNX6 promotes lysosomal degradation.

It is found in the nucleus. The protein resides in the cytoplasm. The protein localises to the endosome. Its function is as follows. Important regulator of cell cycle progression. Inhibits the kinase activity of CDK2 bound to cyclin A, but has little inhibitory activity on CDK2 bound to SPDYA. Involved in G1 arrest. Potent inhibitor of cyclin E- and cyclin A-CDK2 complexes. Forms a complex with cyclin type D-CDK4 complexes and is involved in the assembly, stability, and modulation of CCND1-CDK4 complex activation. Acts either as an inhibitor or an activator of cyclin type D-CDK4 complexes depending on its phosphorylation state and/or stoichometry. This is Cyclin-dependent kinase inhibitor 1B (Cdkn1b) from Mus musculus (Mouse).